A 505-amino-acid polypeptide reads, in one-letter code: Lysine--tRNA ligase, heat inducible (505 aa).

N6-acetyllysine occurs at positions 114 and 156. Glu415 and Glu422 together coordinate Mg(2+).

Belongs to the class-II aminoacyl-tRNA synthetase family. In terms of assembly, homodimer. Requires Mg(2+) as cofactor.

The protein resides in the cytoplasm. The enzyme catalyses tRNA(Lys) + L-lysine + ATP = L-lysyl-tRNA(Lys) + AMP + diphosphate. The sequence is that of Lysine--tRNA ligase, heat inducible (lysU) from Escherichia coli O6:H1 (strain CFT073 / ATCC 700928 / UPEC).